The primary structure comprises 364 residues: Probable cysteine protease RDL4 (364 aa).

Positions 1 to 23 (MGSAKSAMLILLVAMVIASCATA) are cleaved as a signal peptide. Residues 24–136 (IDMSVVSYDD…DRYKTSADDV (113 aa)) constitute a propeptide, activation peptide. Asn-87 is a glycosylation site (N-linked (GlcNAc...) asparagine). Intrachain disulfides connect Cys-158-Cys-199, Cys-192-Cys-232, and Cys-291-Cys-342. The active site involves Cys-161. Catalysis depends on residues His-297 and Asn-317.

Belongs to the peptidase C1 family. As to expression, expressed in inflorescences.

Probable thiol protease. The polypeptide is Probable cysteine protease RDL4 (Arabidopsis thaliana (Mouse-ear cress)).